The chain runs to 599 residues: Group II intron-encoded protein LtrA (599 aa).

A Reverse transcriptase domain is found at 70-361 (IIQSLKDGTY…QPARFLGYDI (292 aa)). Residues 381 to 549 (NGSVELLIPL…AKCCELCGTS (169 aa)) are intron maturase type-2.

In the N-terminal section; belongs to the bacterial reverse transcriptase family. As to quaternary structure, homodimer. It depends on Mg(2+) as a cofactor.

The enzyme catalyses DNA(n) + a 2'-deoxyribonucleoside 5'-triphosphate = DNA(n+1) + diphosphate. Functionally, multifunctional protein that promotes group II intron splicing and mobility by acting both on RNA and DNA. It has three activities: reverse transcriptase (RT) for intron duplication, maturase to promote splicing, and DNA endonuclease for site-specific cleavage of recipient alleles. The intron-encoded protein promotes splicing by facilitating the formation of the catalytically active structure of the intron RNA. After splicing, the protein remains bound to the excised intron lariat RNA, forming ribonucleoprotein particles, and cleaving the antisense strand of the recipient DNA in the 3' exon. After DNA cleavage, retrohoming occurs by a target DNA-primed reverse transcription of the intron RNA that had reverse spliced into the sense strand of the recipient DNA. It also contributes to the recognition of the DNA target site and acts as a repressor of its own translation. In Lactococcus lactis subsp. cremoris (Streptococcus cremoris), this protein is Group II intron-encoded protein LtrA (ltrA).